Consider the following 691-residue polypeptide: UvrABC system protein C (691 aa).

The region spanning 20–97 (STSGVYLWKD…IKKHTPRYNI (78 aa)) is the GIY-YIG domain. A UVR domain is found at 204–239 (DATVARLEKRMKRAVRQEAFEAAARIRDDIQAIRCI). Positions 662 to 691 (RSTTAPVREEYKEHEHDPQGESPGPGRKTD) are disordered. Positions 668 to 680 (VREEYKEHEHDPQ) are enriched in basic and acidic residues.

This sequence belongs to the UvrC family. As to quaternary structure, interacts with UvrB in an incision complex.

It is found in the cytoplasm. The UvrABC repair system catalyzes the recognition and processing of DNA lesions. UvrC both incises the 5' and 3' sides of the lesion. The N-terminal half is responsible for the 3' incision and the C-terminal half is responsible for the 5' incision. The sequence is that of UvrABC system protein C from Treponema pallidum (strain Nichols).